Consider the following 458-residue polypeptide: Kelch repeat and BTB domain-containing protein 13 (458 aa).

The 68-residue stretch at 7-74 (TLVQVWVGGQ…LRGDRPALAA (68 aa)) folds into the BTB domain. Kelch repeat units lie at residues 159–209 (AVST…TLGN), 210–258 (KLYI…GFDG), 259–305 (RLYA…QACG), 307–350 (LFVC…VAHR), and 352–400 (SLYV…VVRG).

In terms of assembly, component of the BCR(KBTBD13) E3 ubiquitin ligase complex, at least composed of CUL3 and KBTBD13 and RBX1. Interacts with CUL3. Post-translationally, autoubiquitinated. Expressed in skeletal muscle.

It localises to the cytoplasm. It functions in the pathway protein modification; protein ubiquitination. Substrate-specific adapter of a BCR (BTB-CUL3-RBX1) E3 ubiquitin ligase complex. The protein is Kelch repeat and BTB domain-containing protein 13 (KBTBD13) of Homo sapiens (Human).